The sequence spans 269 residues: Tryptophan synthase alpha chain (269 aa).

Active-site proton acceptor residues include E49 and D60.

Belongs to the TrpA family. Tetramer of two alpha and two beta chains.

The enzyme catalyses (1S,2R)-1-C-(indol-3-yl)glycerol 3-phosphate + L-serine = D-glyceraldehyde 3-phosphate + L-tryptophan + H2O. It participates in amino-acid biosynthesis; L-tryptophan biosynthesis; L-tryptophan from chorismate: step 5/5. In terms of biological role, the alpha subunit is responsible for the aldol cleavage of indoleglycerol phosphate to indole and glyceraldehyde 3-phosphate. This Histophilus somni (strain 2336) (Haemophilus somnus) protein is Tryptophan synthase alpha chain.